The sequence spans 369 residues: Phosphoribosyl pyrophosphate synthase-associated protein 2 (369 aa).

At M1 the chain carries N-acetylmethionine. T5 carries the phosphothreonine modification. Phosphoserine occurs at positions 219, 227, and 233.

The protein belongs to the ribose-phosphate pyrophosphokinase family. As to quaternary structure, binds to PRPS1 and PRPS2. Ubiquitous.

Seems to play a negative regulatory role in 5-phosphoribose 1-diphosphate synthesis. This Homo sapiens (Human) protein is Phosphoribosyl pyrophosphate synthase-associated protein 2 (PRPSAP2).